Here is a 509-residue protein sequence, read N- to C-terminus: ATP synthase subunit alpha (509 aa).

169 to 176 provides a ligand contact to ATP; the sequence is GDRQTGKT.

The protein belongs to the ATPase alpha/beta chains family. As to quaternary structure, F-type ATPases have 2 components, CF(1) - the catalytic core - and CF(0) - the membrane proton channel. CF(1) has five subunits: alpha(3), beta(3), gamma(1), delta(1), epsilon(1). CF(0) has three main subunits: a(1), b(2) and c(9-12). The alpha and beta chains form an alternating ring which encloses part of the gamma chain. CF(1) is attached to CF(0) by a central stalk formed by the gamma and epsilon chains, while a peripheral stalk is formed by the delta and b chains.

It is found in the cell inner membrane. The enzyme catalyses ATP + H2O + 4 H(+)(in) = ADP + phosphate + 5 H(+)(out). Its function is as follows. Produces ATP from ADP in the presence of a proton gradient across the membrane. The alpha chain is a regulatory subunit. This is ATP synthase subunit alpha from Bradyrhizobium diazoefficiens (strain JCM 10833 / BCRC 13528 / IAM 13628 / NBRC 14792 / USDA 110).